The chain runs to 423 residues: Glucose-1-phosphate adenylyltransferase (423 aa).

Residues Tyr-98, Gly-163, 178–179, and Ser-189 contribute to the alpha-D-glucose 1-phosphate site; that span reads EK.

The protein belongs to the bacterial/plant glucose-1-phosphate adenylyltransferase family. As to quaternary structure, homotetramer.

It carries out the reaction alpha-D-glucose 1-phosphate + ATP + H(+) = ADP-alpha-D-glucose + diphosphate. Its pathway is glycan biosynthesis; glycogen biosynthesis. In terms of biological role, involved in the biosynthesis of ADP-glucose, a building block required for the elongation reactions to produce glycogen. Catalyzes the reaction between ATP and alpha-D-glucose 1-phosphate (G1P) to produce pyrophosphate and ADP-Glc. In Thermotoga maritima (strain ATCC 43589 / DSM 3109 / JCM 10099 / NBRC 100826 / MSB8), this protein is Glucose-1-phosphate adenylyltransferase.